The primary structure comprises 404 residues: Phosphopentomutase (404 aa).

Mn(2+) is bound by residues Asp-10, Asp-303, His-308, Asp-344, His-345, and His-356.

It belongs to the phosphopentomutase family. Mn(2+) serves as cofactor.

The protein resides in the cytoplasm. It catalyses the reaction 2-deoxy-alpha-D-ribose 1-phosphate = 2-deoxy-D-ribose 5-phosphate. The catalysed reaction is alpha-D-ribose 1-phosphate = D-ribose 5-phosphate. Its pathway is carbohydrate degradation; 2-deoxy-D-ribose 1-phosphate degradation; D-glyceraldehyde 3-phosphate and acetaldehyde from 2-deoxy-alpha-D-ribose 1-phosphate: step 1/2. Its function is as follows. Isomerase that catalyzes the conversion of deoxy-ribose 1-phosphate (dRib-1-P) and ribose 1-phosphate (Rib-1-P) to deoxy-ribose 5-phosphate (dRib-5-P) and ribose 5-phosphate (Rib-5-P), respectively. The polypeptide is Phosphopentomutase (Shewanella baltica (strain OS185)).